A 269-amino-acid polypeptide reads, in one-letter code: Ribosomal RNA small subunit methyltransferase A (269 aa).

Residues asparagine 11, leucine 13, glycine 37, glutamate 57, aspartate 85, and asparagine 104 each contribute to the S-adenosyl-L-methionine site.

The protein belongs to the class I-like SAM-binding methyltransferase superfamily. rRNA adenine N(6)-methyltransferase family. RsmA subfamily.

Its subcellular location is the cytoplasm. It carries out the reaction adenosine(1518)/adenosine(1519) in 16S rRNA + 4 S-adenosyl-L-methionine = N(6)-dimethyladenosine(1518)/N(6)-dimethyladenosine(1519) in 16S rRNA + 4 S-adenosyl-L-homocysteine + 4 H(+). Functionally, specifically dimethylates two adjacent adenosines (A1518 and A1519) in the loop of a conserved hairpin near the 3'-end of 16S rRNA in the 30S particle. May play a critical role in biogenesis of 30S subunits. In Campylobacter hominis (strain ATCC BAA-381 / DSM 21671 / CCUG 45161 / LMG 19568 / NCTC 13146 / CH001A), this protein is Ribosomal RNA small subunit methyltransferase A.